Here is a 487-residue protein sequence, read N- to C-terminus: Rhoptry apical surface protein 1 (487 aa).

Residues 337-487 (EVAMSGRGGH…EEEQPLLFTQ (151 aa)) are disordered. Basic and acidic residues-rich tracts occupy residues 385–399 (DGIR…DRRA) and 454–475 (EKNE…GVEY).

Interacts with RASP2.

The protein localises to the cytoplasmic vesicle. Its subcellular location is the secretory vesicle. It is found in the rhoptry membrane. The protein is Rhoptry apical surface protein 1 of Toxoplasma gondii (strain ATCC 50853 / GT1).